A 363-amino-acid polypeptide reads, in one-letter code: Chorismate synthase (363 aa).

Positions 48 and 54 each coordinate NADP(+). FMN contacts are provided by residues 125-127 (RSS), 237-238 (NA), Gly-277, 292-296 (KPTSS), and Arg-318.

It belongs to the chorismate synthase family. In terms of assembly, homotetramer. It depends on FMNH2 as a cofactor.

It carries out the reaction 5-O-(1-carboxyvinyl)-3-phosphoshikimate = chorismate + phosphate. It participates in metabolic intermediate biosynthesis; chorismate biosynthesis; chorismate from D-erythrose 4-phosphate and phosphoenolpyruvate: step 7/7. Its function is as follows. Catalyzes the anti-1,4-elimination of the C-3 phosphate and the C-6 proR hydrogen from 5-enolpyruvylshikimate-3-phosphate (EPSP) to yield chorismate, which is the branch point compound that serves as the starting substrate for the three terminal pathways of aromatic amino acid biosynthesis. This reaction introduces a second double bond into the aromatic ring system. This is Chorismate synthase from Pseudomonas paraeruginosa (strain DSM 24068 / PA7) (Pseudomonas aeruginosa (strain PA7)).